The sequence spans 446 residues: Glutamate-1-semialdehyde 2,1-aminomutase (446 aa).

Lys-264 carries the post-translational modification N6-(pyridoxal phosphate)lysine.

Belongs to the class-III pyridoxal-phosphate-dependent aminotransferase family. HemL subfamily. The cofactor is pyridoxal 5'-phosphate.

The protein resides in the cytoplasm. The catalysed reaction is (S)-4-amino-5-oxopentanoate = 5-aminolevulinate. It functions in the pathway porphyrin-containing compound metabolism; protoporphyrin-IX biosynthesis; 5-aminolevulinate from L-glutamyl-tRNA(Glu): step 2/2. This is Glutamate-1-semialdehyde 2,1-aminomutase from Natronomonas pharaonis (strain ATCC 35678 / DSM 2160 / CIP 103997 / JCM 8858 / NBRC 14720 / NCIMB 2260 / Gabara) (Halobacterium pharaonis).